Here is a 1136-residue protein sequence, read N- to C-terminus: Type I inositol polyphosphate 5-phosphatase 13 (1136 aa).

WD repeat units follow at residues 147–185 (ETQTGRFLRNIACTETQLWAGQENGIRFWNLEDAYEAGC), 205–244 (VTTSPTMCLVADQSNKLLWSGHKDGKIRAWKMDQSSVSHD), 259–297 (AHRGPVNSIVISSYGDMWSCSEGGVIKIWPWDTLEKSLL), 436–475 (EDTRKTEAIVLAVDGTIWTGSISGLIVQWDGNGNRLRDVN), and 515–552 (SHNEPVIKLAAGGGFIFSLATHGGVRGWYVTSPGPLDN). Catalytic regions lie at residues 782–798 (DMVAFFGDFNYRLFGIT) and 861–876 (KKRIPAWCDRVIYRDT). K940 participates in a covalent cross-link: Glycyl lysine isopeptide (Lys-Gly) (interchain with G-Cter in ubiquitin). The segment at 1104–1136 (KNLGGSRRYPTDITRNGSTRPRTEDSVRRGKSR) is disordered. Residues 1124-1136 (PRTEDSVRRGKSR) show a composition bias toward basic and acidic residues.

It belongs to the inositol polyphosphate 5-phosphatase family. In terms of assembly, interacts with KIN10, but not with PHOT1. Mg(2+) serves as cofactor. In terms of tissue distribution, expressed in young seedlings and flowers. Highly expressed in anther and pollen grains, but not in pistils. Not detected in maturated roots, stems and rosette leaves.

Its subcellular location is the nucleus. The enzyme catalyses 1D-myo-inositol 1,4,5-trisphosphate + H2O = 1D-myo-inositol 1,4-bisphosphate + phosphate. In terms of biological role, converts inositol 1,4,5-trisphosphate (Ins(1,4,5)P3) to inositol 1,4-bisphosphate. Modulates cotyledon vein development through regulating auxin homeostasis. Involved in blue light responses. Decreases the amount of KIN10 degraded by the proteasome under low nutrient conditions. Participates with IP5P12 in the control of Ins(1,4,5)P3/Ca(2+) levels that is crucial for maintaining pollen dormancy and regulating early germination of pollen. May modulate auxin transport by regulating vesicle trafficking and thereby plays a role in root gravitropism. This Arabidopsis thaliana (Mouse-ear cress) protein is Type I inositol polyphosphate 5-phosphatase 13.